A 665-amino-acid chain; its full sequence is Pre-mRNA-processing factor 39 (665 aa).

The span at 1–11 (MQNSHMEEYRN) shows a compositional bias: basic and acidic residues. The tract at residues 1-28 (MQNSHMEEYRNSDNGSTGNSSEVAVVEH) is disordered. The span at 12–22 (SDNGSTGNSSE) shows a compositional bias: polar residues. Residue Ser44 is modified to Phosphoserine. 7 HAT repeats span residues 107–139 (NHLM…LEKR), 141–173 (DNIK…FLKE), 181–216 (ETNT…WENE), 218–251 (GNLR…HVQN), 331–363 (FEEG…FEIE), 365–397 (GTHE…YMEN), and 402–434 (GVRH…QQGN). The span at 599–622 (QDTLKRKAENGSEEPEEKKAHTED) shows a compositional bias: basic and acidic residues. A disordered region spans residues 599–625 (QDTLKRKAENGSEEPEEKKAHTEDLSS).

This sequence belongs to the PRP39 family.

The protein resides in the nucleus. In terms of biological role, involved in pre-mRNA splicing. The chain is Pre-mRNA-processing factor 39 (Prpf39) from Mus musculus (Mouse).